Reading from the N-terminus, the 1774-residue chain is U3 small nucleolar RNA-associated protein 10 (1774 aa).

The interval Thr1209–Pro1228 is disordered. An HEAT repeat occupies Leu1734 to Tyr1772.

This sequence belongs to the HEATR1/UTP10 family. As to quaternary structure, component of the ribosomal small subunit (SSU) processome.

Its subcellular location is the nucleus. The protein resides in the nucleolus. Its function is as follows. Involved in nucleolar processing of pre-18S ribosomal RNA. Involved in ribosome biosynthesis. This Eremothecium gossypii (strain ATCC 10895 / CBS 109.51 / FGSC 9923 / NRRL Y-1056) (Yeast) protein is U3 small nucleolar RNA-associated protein 10.